The chain runs to 363 residues: Probable endopolygalacturonase B (363 aa).

Residues 1 to 20 form the signal peptide; that stretch reads MQLLQSSVIAATVGAALVAA. Residues 21–28 constitute a propeptide that is removed on maturation; that stretch reads VPVELEAR. Residues Cys-31 and Cys-46 are joined by a disulfide bond. 6 PbH1 repeats span residues 158 to 187, 188 to 209, 210 to 230, 239 to 260, 268 to 290, and 302 to 347; these read SDNLNITDVTIDNSAGTAEGHNTDAFDVGS, STYINIDGATVYNQDDCLAINS, GSHITFTNGYCDGGHGLSIGS, VEDVTISNSKVVNSQNGVRIKT, VSNVKFEDITLSGITKYGLIVEQ, and TNGI…SITG. The N-linked (GlcNAc...) asparagine glycan is linked to Asn-162. Asp-202 functions as the Proton donor in the catalytic mechanism. An intrachain disulfide couples Cys-204 to Cys-220. The active site involves His-224. Cystine bridges form between Cys-330–Cys-335 and Cys-354–Cys-363.

Belongs to the glycosyl hydrolase 28 family.

Its subcellular location is the secreted. It carries out the reaction (1,4-alpha-D-galacturonosyl)n+m + H2O = (1,4-alpha-D-galacturonosyl)n + (1,4-alpha-D-galacturonosyl)m.. In terms of biological role, involved in maceration and soft-rotting of plant tissue. Hydrolyzes the 1,4-alpha glycosidic bonds of de-esterified pectate in the smooth region of the plant cell wall. The sequence is that of Probable endopolygalacturonase B (pgaB) from Aspergillus flavus (strain ATCC 200026 / FGSC A1120 / IAM 13836 / NRRL 3357 / JCM 12722 / SRRC 167).